The chain runs to 264 residues: Synaptophysin-like protein 2 (264 aa).

Over 1–33 (MSSTESPGRTSDKSPRQQVDRLLLGLRWQRLEE) the chain is Cytoplasmic. The MARVEL domain occupies 30-238 (RLEEPLGFIK…NCWFVFKETP (209 aa)). Residues 34-54 (PLGFIKVLQWLFAIFAFGSCG) form a helical membrane-spanning segment. Residues 55–116 (SYSGETGALV…LMGDFSAPAE (62 aa)) lie on the Vesicular side of the membrane. The helical transmembrane segment at 117–137 (FFVTLGIFSFFYTMAALVIYL) threads the bilayer. The Cytoplasmic segment spans residues 138–150 (RFHKLYTENKRFP). A helical transmembrane segment spans residues 151–171 (LVDFCVTVSFTFFWLVAAAAW). At 172–213 (GKGLTDVKGATRPSSLTAAMSVCHGEEAVCSAGATPSMGLAN) the chain is on the vesicular side. A glycan (N-linked (GlcNAc...) asparagine) is linked at Asn213. The chain crosses the membrane as a helical span at residues 214–234 (LSVLFGFINFFLWAGNCWFVF). Residues 235-264 (KETPWHGQGQDQGQGPSQESAAEQGAVEKQ) are Cytoplasmic-facing. A disordered region spans residues 242–264 (QGQDQGQGPSQESAAEQGAVEKQ).

The protein belongs to the synaptophysin/synaptobrevin family. In terms of tissue distribution, expressed abundantly in skeletal muscle and at lower levels in the kidney.

The protein localises to the membrane. In terms of biological role, involved in communication between the T-tubular and junctional sarcoplasmic reticulum (SR) membranes. In Mus musculus (Mouse), this protein is Synaptophysin-like protein 2 (Sypl2).